The primary structure comprises 776 residues: Chitin synthase 1 (776 aa).

6 consecutive transmembrane segments (helical) span residues 451–471 (LVSLLFSFFSLSNFYLTFYFL), 487–507 (FWIFTLFNYLCIGVLTSLFIV), 523–543 (LIILLTICALYALVVGFVFVI), 558–578 (VLVSIVVSLLSTYGLYTLMSI), 695–714 (VVLFWMIANLVFIMTMVQVY), and 723–743 (IYLAFILWAVAVLALVRAIGS).

The protein belongs to the chitin synthase family.

The protein localises to the cell membrane. It carries out the reaction [(1-&gt;4)-N-acetyl-beta-D-glucosaminyl](n) + UDP-N-acetyl-alpha-D-glucosamine = [(1-&gt;4)-N-acetyl-beta-D-glucosaminyl](n+1) + UDP + H(+). Requires proteolytic activation. In terms of biological role, polymerizes chitin, a structural polymer of the cell wall and septum, by transferring the sugar moiety of UDP-GlcNAc to the non-reducing end of the growing chitin polymer. Also involved in forming cross walls in the hyphal phase. The polypeptide is Chitin synthase 1 (CHS1) (Candida albicans (Yeast)).